The primary structure comprises 335 residues: Vitamin B12 import system permease protein BtuC (335 aa).

Helical transmembrane passes span 25 to 45 (LVVM…VWIW), 67 to 87 (MAVI…QALF), 94 to 113 (PGLL…AVLL), 117 to 139 (LLPI…SILL), 153 to 173 (LLVG…AVYF), 243 to 263 (VLAI…ISFI), 281 to 301 (RLLA…DVVA), and 309 to 329 (ELPI…WLLI).

The protein belongs to the binding-protein-dependent transport system permease family. FecCD subfamily. As to quaternary structure, the complex is composed of two ATP-binding proteins (BtuD), two transmembrane proteins (BtuC) and a solute-binding protein (BtuF).

The protein localises to the cell inner membrane. Functionally, part of the ABC transporter complex BtuCDF involved in vitamin B12 import. Involved in the translocation of the substrate across the membrane. In Yersinia pseudotuberculosis serotype O:1b (strain IP 31758), this protein is Vitamin B12 import system permease protein BtuC.